The following is a 794-amino-acid chain: Striatin-3 (794 aa).

At Met1 the chain carries N-acetylmethionine. A compositionally biased stretch (gly residues) spans Met1–Gly12. Residues Met1–Pro59 form a disordered region. The segment at Tyr70–Phe78 is caveolin-binding. Positions Ala76–Lys135 form a coiled coil. Thr149 carries the phosphothreonine modification. Residues Gln164–Leu181 are calmodulin-binding. Residues Ser200, Ser212, Ser227, Ser255, and Ser332 each carry the phosphoserine modification. A disordered region spans residues Glu309–Asp339. WD repeat units lie at residues Ser475–Lys514, Ala528–Tyr567, Ala581–Cys620, Gln676–Ser715, Ala718–Glu757, and Lys764–Val794.

It belongs to the WD repeat striatin family. Tetramerizes. Part of the core of STRIPAK complexes composed of PP2A catalytic and scaffolding subunits, the striatins (PP2A regulatory subunits), the striatin-associated proteins MOB4, STRIP1 and STRIP2, PDCD10 and members of the STE20 kinases, such as STK24 and STK26. The STRIPAK complex can be extended by adapter proteins such as SLMAP:SIKE1 or CTTNBP2NL. Interacts with CDC42BPB.

It localises to the cytoplasm. Its subcellular location is the membrane. Functionally, calmodulin-binding scaffolding protein which is the center of the striatin-interacting phosphatase and kinase (STRIPAK) complexes. STRIPAK complexes have critical roles in protein (de)phosphorylation and are regulators of multiple signaling pathways including Hippo, MAPK, nuclear receptor and cytoskeleton remodeling. Different types of STRIPAK complexes are involved in a variety of biological processes such as cell growth, differentiation, apoptosis, metabolism and immune regulation. The sequence is that of Striatin-3 (Strn3) from Rattus norvegicus (Rat).